We begin with the raw amino-acid sequence, 581 residues long: Proline--tRNA ligase (581 aa).

It belongs to the class-II aminoacyl-tRNA synthetase family. ProS type 1 subfamily. Homodimer.

It is found in the cytoplasm. It carries out the reaction tRNA(Pro) + L-proline + ATP = L-prolyl-tRNA(Pro) + AMP + diphosphate. Catalyzes the attachment of proline to tRNA(Pro) in a two-step reaction: proline is first activated by ATP to form Pro-AMP and then transferred to the acceptor end of tRNA(Pro). As ProRS can inadvertently accommodate and process non-cognate amino acids such as alanine and cysteine, to avoid such errors it has two additional distinct editing activities against alanine. One activity is designated as 'pretransfer' editing and involves the tRNA(Pro)-independent hydrolysis of activated Ala-AMP. The other activity is designated 'posttransfer' editing and involves deacylation of mischarged Ala-tRNA(Pro). The misacylated Cys-tRNA(Pro) is not edited by ProRS. The sequence is that of Proline--tRNA ligase from Azoarcus sp. (strain BH72).